The chain runs to 459 residues: Mitochondrial distribution and morphology protein 34 (459 aa).

In terms of domain architecture, SMP-LTD spans 1-190 (MSFRFNEAVF…LPSLIFNTSQ (190 aa)). Basic and acidic residues predominate over residues 338 to 347 (RSNSNDDNAK). Positions 338 to 375 (RSNSNDDNAKPRRRKIKCKKTRTPSNLQSQGEQAVDDS) are disordered. Over residues 348–359 (PRRRKIKCKKTR) the composition is skewed to basic residues.

Belongs to the MDM34 family. As to quaternary structure, component of the ER-mitochondria encounter structure (ERMES) or MDM complex, composed of MMM1, MDM10, MDM12 and MDM34. Ubiquitinated by a SCF (SKP1-CUL1-F-box protein) E3 ubiquitin-protein ligase complex containing the F-box protein MDM30. Ubiquitination is important for mitochondrial integrity.

The protein resides in the mitochondrion outer membrane. Functionally, component of the ERMES/MDM complex, which serves as a molecular tether to connect the endoplasmic reticulum (ER) and mitochondria. Components of this complex are involved in the control of mitochondrial shape and protein biogenesis, and function in nonvesicular lipid trafficking between the ER and mitochondria. MDM34 is required for the interaction of the ER-resident membrane protein MMM1 and the outer mitochondrial membrane-resident beta-barrel protein MDM10. The sequence is that of Mitochondrial distribution and morphology protein 34 from Saccharomyces cerevisiae (strain RM11-1a) (Baker's yeast).